The primary structure comprises 465 residues: MAPVSNQAGGHVAVLAFPFSTHAAPLLNIVCRLAAAAPSTLFSFFNTKQSNSSILASDTSVLRYTNVCVCEVADGVPEGYVFVGKPQEDIELFMKAAPDNFRKCLEASVAESGREVSCLVTDAFFWFGAHMADDMGGVPWVPFWTAGPASLSAHVHTDLIRNTTSGDCHDEKETITVIAGMSKVRPQDLPEGIIFGNLESLFSRMLHQMGLMLPLATAVFINSFEELDPVITNDLKSKFKRFLNVGPLDLLEPTASAATTTPQTAEAVAGDGCLSWLDKQKAASVVYVSFGSVTRPSPEELMALAEALEASRVPFLWSLRDNLKNPQLDEFLSKGKLNGMVVPWAPQPQVLAHGSVGAFVTHCGWNSVLESVAGGVPLICRPFFGDQKLNARMVEDVWKIGLRLEGGVFTKNGMLKSLDMLLSQDKGTKMKNKIHTLKQLAQQAVEPKGSSTRNFESLLEMATTN.

The active-site Proton acceptor is the H22. The an anthocyanidin site is built by H22 and Q87. Catalysis depends on D122, which acts as the Charge relay. A UDP-alpha-D-glucose-binding site is contributed by T145. An an anthocyanidin-binding site is contributed by H154. UDP-alpha-D-glucose is bound by residues A345, Q347, H362, W365, N366, S367, and E370. G385 contacts an anthocyanidin. UDP-alpha-D-glucose-binding residues include D386 and Q387.

The protein belongs to the UDP-glycosyltransferase family. In terms of tissue distribution, highest expression detected in fruit, with very low levels detected in petal and leaf.

The enzyme catalyses an anthocyanidin + UDP-alpha-D-glucose + H(+) = an anthocyanidin 3-O-beta-D-glucoside + UDP. It carries out the reaction pelargonidin + UDP-alpha-D-glucose = pelargonidin 3-O-beta-D-glucoside + UDP. It catalyses the reaction cyanidin + UDP-alpha-D-glucose = cyanidin 3-O-beta-D-glucoside + UDP + H(+). The protein operates within pigment biosynthesis; anthocyanin biosynthesis. In the presence of other necessary color factors, this glycosylation reaction allows the accumulation of anthocyanin pigments. Anthocyanidins are the preferred substrates, while flavonols are only a minor substrate in vitro. The chain is Anthocyanidin 3-O-glucosyltransferase 2 from Fragaria ananassa (Strawberry).